The following is a 405-amino-acid chain: Na(+)/H(+) antiporter NhaA 1 (405 aa).

The next 11 helical transmembrane spans lie at 20–40 (FVSDASAGILLILVAAAAMIV), 68–88 (LHLWINDGLMAIFFFVVGLEV), 105–125 (LPVLAAIAGMAVPAIVYVGVV), 134–154 (GWAIPAATDIAFAMGVLGLLG), 163–183 (LFLLTVAIVDDIGAVLVIAAF), 186–206 (ANLKVMWLVIALGIFGVMVGM), 214–234 (IWPYILVALVLWVAVLFSGVH), 263–283 (GLAPWSAYLVVPIFGFANAGV), 301–321 (IAAGLVVGKQLGIFGIIVAAV), 334–354 (WIEIWGVSILTGIGFTMSLFI), and 371–391 (IGILGGSLISAILGYTILRLT).

The protein belongs to the NhaA Na(+)/H(+) (TC 2.A.33) antiporter family.

The protein localises to the cell inner membrane. The catalysed reaction is Na(+)(in) + 2 H(+)(out) = Na(+)(out) + 2 H(+)(in). Its function is as follows. Na(+)/H(+) antiporter that extrudes sodium in exchange for external protons. The sequence is that of Na(+)/H(+) antiporter NhaA 1 from Erythrobacter litoralis (strain HTCC2594).